Reading from the N-terminus, the 817-residue chain is Verprolin (817 aa).

The span at 1–15 (MAGAPAPPPPPPPPA) shows a compositional bias: pro residues. The segment at 1-752 (MAGAPAPPPP…THTNQPDVDV (752 aa)) is disordered. Residues 30–47 (GRDALLGDIRKGMKLKKA) form the WH2 1 domain. Positions 37 to 51 (DIRKGMKLKKAETND) are enriched in basic and acidic residues. Over residues 62-79 (VSSASGSSGTVSSKGPSM) the composition is skewed to low complexity. Residues 87-106 (MGAPQLGDILAGGIPKLKHI) form the WH2 2 domain. Asparagine 109 is a glycosylation site (N-linked (GlcNAc...) asparagine). Positions 119–180 (SAPPIPGAVP…VPSSPAPPLP (62 aa)) are enriched in pro residues. N-linked (GlcNAc...) asparagine glycosylation occurs at asparagine 212. Residues 236–245 (PQAPPPPPTP) are compositionally biased toward pro residues. Positions 254–265 (IKPTDNAVSPPS) are enriched in polar residues. Positions 306–335 (SQPPLPSSAPPIPTSHAPPLPPTAPPPPSL) are enriched in pro residues. The segment covering 336-348 (PNVTSAPKKATSA) has biased composition (low complexity). Asparagine 337 is a glycosylation site (N-linked (GlcNAc...) asparagine). Residues 372–382 (PVPPTLAPPLP) are compositionally biased toward pro residues. Residue asparagine 383 is glycosylated (N-linked (GlcNAc...) asparagine). Positions 383 to 395 (NTTSVPPNKASSM) are enriched in low complexity. Pro residues predominate over residues 396 to 407 (PAPPPPPPPPPG). Positions 408–422 (AFSTSSALSASSIPL) are enriched in low complexity. Pro residues predominate over residues 423–432 (APLPPPPPPS). Residues 447–469 (LTTNKPSASSKQSKISSSSSSSA) are compositionally biased toward low complexity. Residues 502–516 (DKQEDVIGSSKDDNV) show a composition bias toward basic and acidic residues. The segment covering 518–534 (PSPISPSINPPKQSSQN) has biased composition (low complexity). Serine 519 carries the phosphoserine modification. Pro residues predominate over residues 557 to 579 (APPPHTDAMAPPLPPSAPPPPIT). Basic and acidic residues predominate over residues 588-597 (GDDHTNDKSE). Over residues 649-661 (PPSPPVAAAPPLP) the composition is skewed to pro residues. Positions 713–737 (MDTGTSNSPSKNLKQRLFSTGGSTL) are enriched in polar residues. The residue at position 762 (serine 762) is a Phosphoserine. N-linked (GlcNAc...) asparagine glycosylation is found at asparagine 784 and asparagine 796. Residues 786–806 (SQMPKPRPFQNKTKLYPSGKG) are disordered.

Belongs to the verprolin family. N-glycosylated.

The protein localises to the cytoplasm. Its subcellular location is the cytoskeleton. Functionally, involved in cytoskeletal organization and cellular growth. May exert its effects on the cytoskeleton directly, or indirectly via proline-binding proteins (e.g. profilin) or proteins possessing SH3 domains. The protein is Verprolin (VRP1) of Saccharomyces cerevisiae (strain ATCC 204508 / S288c) (Baker's yeast).